Here is a 104-residue protein sequence, read N- to C-terminus: Ig lambda-3 chain C region (104 aa).

Positions 6–99 (PTLTMFPPSP…EGDTVEKSLS (94 aa)) constitute an Ig-like domain. A disulfide bond links Cys27 and Cys85.

The protein is Ig lambda-3 chain C region (Iglc3) of Mus musculus (Mouse).